The following is a 430-amino-acid chain: Enolase (430 aa).

Gln-163 lines the (2R)-2-phosphoglycerate pocket. The active-site Proton donor is Glu-205. Mg(2+) contacts are provided by Asp-242, Glu-288, and Asp-315. (2R)-2-phosphoglycerate-binding residues include Lys-340, Arg-369, Ser-370, and Lys-391. Lys-340 serves as the catalytic Proton acceptor.

The protein belongs to the enolase family. Mg(2+) is required as a cofactor.

Its subcellular location is the cytoplasm. It is found in the secreted. The protein localises to the cell surface. It catalyses the reaction (2R)-2-phosphoglycerate = phosphoenolpyruvate + H2O. It participates in carbohydrate degradation; glycolysis; pyruvate from D-glyceraldehyde 3-phosphate: step 4/5. Functionally, catalyzes the reversible conversion of 2-phosphoglycerate (2-PG) into phosphoenolpyruvate (PEP). It is essential for the degradation of carbohydrates via glycolysis. The sequence is that of Enolase from Phytoplasma australiense.